A 647-amino-acid polypeptide reads, in one-letter code: DNA mismatch repair protein MutL (647 aa).

It belongs to the DNA mismatch repair MutL/HexB family.

In terms of biological role, this protein is involved in the repair of mismatches in DNA. It is required for dam-dependent methyl-directed DNA mismatch repair. May act as a 'molecular matchmaker', a protein that promotes the formation of a stable complex between two or more DNA-binding proteins in an ATP-dependent manner without itself being part of a final effector complex. The chain is DNA mismatch repair protein MutL from Bacillus thuringiensis (strain Al Hakam).